The sequence spans 157 residues: MHPVRKQRLMTVLFIVIASSVAVGLMVFALSKNLNLFYPPSQIVSGEAPRGPTIRGGGCVVPGSVERASDSLKVAFSITDGKESVLVRYEGLLPDLFDEGEAAVVTGKVTQEGVFEAVEVLAKHDETYTPPEVENAMKESVDGVEHQKTCEGLDYAS.

Residues 1–8 (MHPVRKQR) lie on the Cytoplasmic side of the membrane. The helical; Signal-anchor for type II membrane protein transmembrane segment at 9-29 (LMTVLFIVIASSVAVGLMVFA) threads the bilayer. The Periplasmic portion of the chain corresponds to 30–157 (LSKNLNLFYP…KTCEGLDYAS (128 aa)). 2 residues coordinate heme: His-124 and Tyr-128.

Belongs to the CcmE/CycJ family.

The protein localises to the cell inner membrane. Functionally, heme chaperone required for the biogenesis of c-type cytochromes. Transiently binds heme delivered by CcmC and transfers the heme to apo-cytochromes in a process facilitated by CcmF and CcmH. In Saccharophagus degradans (strain 2-40 / ATCC 43961 / DSM 17024), this protein is Cytochrome c-type biogenesis protein CcmE.